We begin with the raw amino-acid sequence, 233 residues long: B-cell lymphoma/leukemia 10 (233 aa).

The residue at position 1 (methionine 1) is an N-acetylmethionine. A CARD domain is found at 13–101 (LTEVKKDALE…QSFLIQKITD (89 aa)). Glycyl lysine isopeptide (Lys-Gly) (interchain with G-Cter in ubiquitin) cross-links involve residues lysine 17, lysine 31, and lysine 63. Serine 138 is modified (phosphoserine). Positions 185 to 233 (SSFSSATLPRPGDPGAPPLPPDLRLEEGGSCGNSSEMFLPLRSRALSRQ) are disordered. The segment covering 195–205 (PGDPGAPPLPP) has biased composition (pro residues).

In terms of assembly, homomultimer; homooligomerized following recruitment by CARD domain-containing proteins that form a nucleating helical template that recruits BCL10 via CARD-CARD interaction. Self-associates by CARD-CARD interaction and interacts with other CARD-proteins such as CARD9, CARD10, CARD11 and CARD14. Forms a complex with CARD14 and MALT1; resulting in the formation of a CBM (CARD14-BCL10-MALT1) complex. Forms a complex with CARD11 and MALT1; resulting in the formation of a CBM (CARD11-BCL10-MALT1) complex. Forms a complex with CARD9 and MALT1; resulting in the formation of a CBM (CARD9-BCL10-MALT1) complex. Found in a membrane raft complex, at least composed of BCL10, CARD11, DPP4 and IKBKB. Binds caspase-9 with its C-terminal domain. Interacts with TRAF2 and BIRC2/c-IAP2. Interacts with PELI2 and SOCS3; these interactions may be mutually exclusive. In terms of processing, phosphorylated by IKBKB/IKKB. Ubiquitinated via both 'Lys-63'-linked and linear ('Met-1'-linked) polyubiquitin chains in response to T-cell receptor (TCR) activation. Ubiquitination is recognized by IKBKG/NEMO, the regulatory subunit of I-kappa-B kinase (IKK), and is required for TCR-induced NF-kappa-B activation. Linear ubiquitination at Lys-17, Lys-31 and Lys-63 is mediated by RNF31/HOIP; linear ubiquitination is recognized with much higher affinity than 'Lys-63'-linked ubiquitin by IKBKG/NEMO. CARD11 is required for linear ubiquitination by HOIP by promoting the targeting of BCL10 to RNF31/HOIP. Post-translationally, proteolytically cleaved by MALT1; required for T-cell activation. Highly expressed in heart, brain, spleen, lung, liver, skeletal muscle, kidney and testis. Detected in developing brain, olfactory epithelium, tongue, whisker follicles, salivary gland, heart, lung, liver and intestinal epithelia of stage 15 embryos.

The protein resides in the cytoplasm. Its subcellular location is the membrane raft. Its function is as follows. Plays a key role in both adaptive and innate immune signaling by bridging CARD domain-containing proteins to immune activation. Acts by channeling adaptive and innate immune signaling downstream of CARD domain-containing proteins CARD9, CARD11 and CARD14 to activate NF-kappa-B and MAP kinase p38 (MAPK11, MAPK12, MAPK13 and/or MAPK14) pathways which stimulate expression of genes encoding pro-inflammatory cytokines and chemokines. Recruited by activated CARD domain-containing proteins: homooligomerized CARD domain-containing proteins form a nucleating helical template that recruits BCL10 via CARD-CARD interaction, thereby promoting polymerization of BCL10, subsequent recruitment of MALT1 and formation of a CBM complex. This leads to activation of NF-kappa-B and MAP kinase p38 (MAPK11, MAPK12, MAPK13 and/or MAPK14) pathways which stimulate expression of genes encoding pro-inflammatory cytokines and chemokines. Activated by CARD9 downstream of C-type lectin receptors; CARD9-mediated signals are essential for antifungal immunity. Activated by CARD11 downstream of T-cell receptor (TCR) and B-cell receptor (BCR). Promotes apoptosis, pro-caspase-9 maturation and activation of NF-kappa-B via NIK and IKK. The protein is B-cell lymphoma/leukemia 10 (Bcl10) of Mus musculus (Mouse).